A 268-amino-acid chain; its full sequence is Thiazole synthase (268 aa).

K111 acts as the Schiff-base intermediate with DXP in catalysis. Residues G172, 198 to 199, and 220 to 221 each bind 1-deoxy-D-xylulose 5-phosphate; these read AG and NT.

This sequence belongs to the ThiG family. Homotetramer. Forms heterodimers with either ThiH or ThiS.

It localises to the cytoplasm. The catalysed reaction is [ThiS sulfur-carrier protein]-C-terminal-Gly-aminoethanethioate + 2-iminoacetate + 1-deoxy-D-xylulose 5-phosphate = [ThiS sulfur-carrier protein]-C-terminal Gly-Gly + 2-[(2R,5Z)-2-carboxy-4-methylthiazol-5(2H)-ylidene]ethyl phosphate + 2 H2O + H(+). It participates in cofactor biosynthesis; thiamine diphosphate biosynthesis. In terms of biological role, catalyzes the rearrangement of 1-deoxy-D-xylulose 5-phosphate (DXP) to produce the thiazole phosphate moiety of thiamine. Sulfur is provided by the thiocarboxylate moiety of the carrier protein ThiS. In vitro, sulfur can be provided by H(2)S. In Caulobacter sp. (strain K31), this protein is Thiazole synthase.